The primary structure comprises 257 residues: tRNA (guanine-N(1)-)-methyltransferase (257 aa).

Residues Gly117 and 137 to 142 contribute to the S-adenosyl-L-methionine site; that span reads LGDFVL.

This sequence belongs to the RNA methyltransferase TrmD family. In terms of assembly, homodimer.

The protein resides in the cytoplasm. The enzyme catalyses guanosine(37) in tRNA + S-adenosyl-L-methionine = N(1)-methylguanosine(37) in tRNA + S-adenosyl-L-homocysteine + H(+). Functionally, specifically methylates guanosine-37 in various tRNAs. The protein is tRNA (guanine-N(1)-)-methyltransferase of Bordetella parapertussis (strain 12822 / ATCC BAA-587 / NCTC 13253).